We begin with the raw amino-acid sequence, 178 residues long: Stathmin-2-B (178 aa).

The region spanning 38-178 (DDMEVKQLNK…KNKEQLELSG (141 aa)) is the SLD domain. Residues 75–178 (KRKDVSLEEI…KNKEQLELSG (104 aa)) are a coiled coil.

It belongs to the stathmin family. Nervous tissue.

It is found in the cytoplasm. The protein resides in the membrane. Its subcellular location is the cell projection. The protein localises to the lamellipodium. In Xenopus laevis (African clawed frog), this protein is Stathmin-2-B (stmn2-b).